Here is a 64-residue protein sequence, read N- to C-terminus: Large ribosomal subunit protein bL35 (64 aa).

A disordered region spans residues 1–56 (MPKMKSNKSVAARFKLTGSGQLKRTRPGKRHKLSKKSSQEKRNLSKQPLVDKGQVG). A compositionally biased stretch (basic residues) spans 23–35 (KRTRPGKRHKLSK).

The protein belongs to the bacterial ribosomal protein bL35 family.

The sequence is that of Large ribosomal subunit protein bL35 from Chlamydia abortus (strain DSM 27085 / S26/3) (Chlamydophila abortus).